The following is a 250-amino-acid chain: MVDPISNAAPPMPADSSERLDPPGFAEAPHYHGHRERLRERFREAGAAALSDYELLELVLFRALPRRDVKPLAKALIARFGSFAETMQAPEPRLREVSGLGEAAITEIKLVAAAAARVTKGQVKSRTVLSSWSAVIDYCRTTMAFADREQFRILFLDKRNQLIADELQQVGTVDHTPVYPREIVKRALELSATAVIMVHNHPSGDPTPSQADIQMTKTIVAIAEPLGVAVHDHIIVGKNGHASLKGLKLF.

Residues 1–27 (MVDPISNAAPPMPADSSERLDPPGFAE) are disordered. One can recognise an MPN domain in the interval 128–250 (VLSSWSAVID…HASLKGLKLF (123 aa)). Positions 199, 201, and 212 each coordinate Zn(2+). Residues 199–212 (HNHPSGDPTPSQAD) carry the JAMM motif motif.

The protein belongs to the UPF0758 family.

This is UPF0758 protein RPB_0700 from Rhodopseudomonas palustris (strain HaA2).